The primary structure comprises 67 residues: DNA-directed RNA polymerase subunit Rpo10 (67 aa).

Residues Cys7, Cys10, Cys44, and Cys45 each coordinate Zn(2+).

The protein belongs to the archaeal Rpo10/eukaryotic RPB10 RNA polymerase subunit family. Part of the RNA polymerase complex. Requires Zn(2+) as cofactor.

It localises to the cytoplasm. The enzyme catalyses RNA(n) + a ribonucleoside 5'-triphosphate = RNA(n+1) + diphosphate. DNA-dependent RNA polymerase (RNAP) catalyzes the transcription of DNA into RNA using the four ribonucleoside triphosphates as substrates. This is DNA-directed RNA polymerase subunit Rpo10 from Caldivirga maquilingensis (strain ATCC 700844 / DSM 13496 / JCM 10307 / IC-167).